A 437-amino-acid chain; its full sequence is tRNA modification GTPase MnmE (437 aa).

Positions 21, 79, and 119 each coordinate (6S)-5-formyl-5,6,7,8-tetrahydrofolate. The 142-residue stretch at 223–364 (GFRVVLAGPP…FRSALIAHAR (142 aa)) folds into the TrmE-type G domain. GTP is bound by residues 233-238 (NAGKST), 252-258 (AAEPGTT), and 277-280 (DTAG). Positions 237 and 258 each coordinate Mg(2+). Position 437 (Lys437) interacts with (6S)-5-formyl-5,6,7,8-tetrahydrofolate.

This sequence belongs to the TRAFAC class TrmE-Era-EngA-EngB-Septin-like GTPase superfamily. TrmE GTPase family. As to quaternary structure, homodimer. Heterotetramer of two MnmE and two MnmG subunits. K(+) is required as a cofactor.

The protein resides in the cytoplasm. In terms of biological role, exhibits a very high intrinsic GTPase hydrolysis rate. Involved in the addition of a carboxymethylaminomethyl (cmnm) group at the wobble position (U34) of certain tRNAs, forming tRNA-cmnm(5)s(2)U34. In Novosphingobium aromaticivorans (strain ATCC 700278 / DSM 12444 / CCUG 56034 / CIP 105152 / NBRC 16084 / F199), this protein is tRNA modification GTPase MnmE.